Here is a 200-residue protein sequence, read N- to C-terminus: Trem-like transcript 4 protein (200 aa).

The N-terminal stretch at methionine 1–proline 25 is a signal peptide. Residues glutamate 26–serine 126 enclose the Ig-like V-type domain. Cysteine 40 and cysteine 109 form a disulfide bridge. N-linked (GlcNAc...) asparagine glycosylation occurs at asparagine 93.

The protein resides in the secreted. Functionally, positively regulates Toll-like receptor TLR7 signaling in macrophages. The protein is Trem-like transcript 4 protein (TREML4) of Homo sapiens (Human).